The primary structure comprises 311 residues: Olfactory receptor 1D4 (311 aa).

At 1-25 (MDGDNQSENSQFLLLGISESPEQQQ) the chain is on the extracellular side. An N-linked (GlcNAc...) asparagine glycan is attached at asparagine 5. The chain crosses the membrane as a helical span at residues 26–49 (ILFWMFLSMYLVTVLGNVLIILAI). At 50-57 (SSDSHLHT) the chain is on the cytoplasmic side. Residues 58-79 (PMYFFLANLSFTDLFFVTNTIP) form a helical membrane-spanning segment. The Extracellular portion of the chain corresponds to 80-100 (KMLVNFQSQNKAISYAGCLTQ). A disulfide bond links cysteine 97 and cysteine 189. Residues 101 to 120 (LYFLVSLVTLDNLILAVMAY) form a helical membrane-spanning segment. Residues 121–140 (DRYVAICCPLHYVTAMSPGL) lie on the Cytoplasmic side of the membrane. Residues 141–158 (CVLLLSLCWGLSVLYGLL) traverse the membrane as a helical segment. Topologically, residues 159–196 (LTFLLTRVTFCGPREIHYLFCDMYILLWLACSNTHIIH) are extracellular. Residues 197–220 (TALIATGCFIFLTLLGFMTTSYVR) traverse the membrane as a helical segment. Over 221–237 (IVRTILQMPSASKKYKT) the chain is Cytoplasmic. A helical transmembrane segment spans residues 238-260 (FSTCASHLGVVSLFYGTLAMVYL). The Extracellular segment spans residues 261-271 (QPLHTYSMKDS). A helical membrane pass occupies residues 272–291 (VATVMYAVLTPMMNPFIYSL). Residues 292–311 (RNKDMHGAPGRVLWRPFQRP) lie on the Cytoplasmic side of the membrane.

The protein belongs to the G-protein coupled receptor 1 family.

It is found in the cell membrane. Functionally, odorant receptor. This chain is Olfactory receptor 1D4 (OR1D4), found in Homo sapiens (Human).